The chain runs to 568 residues: Oxygen-dependent choline dehydrogenase (568 aa).

8–37 serves as a coordination point for FAD; the sequence is DYVIIGGGSAGSVLGNRLTEDKDKEVLVLE. Catalysis depends on His473, which acts as the Proton acceptor.

This sequence belongs to the GMC oxidoreductase family. FAD serves as cofactor.

The enzyme catalyses choline + A = betaine aldehyde + AH2. It carries out the reaction betaine aldehyde + NAD(+) + H2O = glycine betaine + NADH + 2 H(+). The protein operates within amine and polyamine biosynthesis; betaine biosynthesis via choline pathway; betaine aldehyde from choline (cytochrome c reductase route): step 1/1. In terms of biological role, involved in the biosynthesis of the osmoprotectant glycine betaine. Catalyzes the oxidation of choline to betaine aldehyde and betaine aldehyde to glycine betaine at the same rate. This is Oxygen-dependent choline dehydrogenase from Staphylococcus haemolyticus (strain JCSC1435).